The following is a 67-amino-acid chain: Large ribosomal subunit protein bL35 (67 aa).

Basic residues predominate over residues 1 to 16 (MPKMKTKKSAAKRFRV). A disordered region spans residues 1 to 22 (MPKMKTKKSAAKRFRVRPGGTV).

It belongs to the bacterial ribosomal protein bL35 family.

The polypeptide is Large ribosomal subunit protein bL35 (Methylibium petroleiphilum (strain ATCC BAA-1232 / LMG 22953 / PM1)).